Reading from the N-terminus, the 349-residue chain is tRNA-specific 2-thiouridylase MnmA (349 aa).

ATP contacts are provided by residues Gly-7–Ser-14 and Leu-33. Catalysis depends on Cys-94, which acts as the Nucleophile. An intrachain disulfide couples Cys-94 to Cys-193. Gly-119 provides a ligand contact to ATP. Positions Lys-143 to Gln-145 are interaction with tRNA. Catalysis depends on Cys-193, which acts as the Cysteine persulfide intermediate. Positions Arg-298–Tyr-299 are interaction with tRNA.

It belongs to the MnmA/TRMU family.

The protein resides in the cytoplasm. The enzyme catalyses S-sulfanyl-L-cysteinyl-[protein] + uridine(34) in tRNA + AH2 + ATP = 2-thiouridine(34) in tRNA + L-cysteinyl-[protein] + A + AMP + diphosphate + H(+). Its function is as follows. Catalyzes the 2-thiolation of uridine at the wobble position (U34) of tRNA, leading to the formation of s(2)U34. This is tRNA-specific 2-thiouridylase MnmA from Rippkaea orientalis (strain PCC 8801 / RF-1) (Cyanothece sp. (strain PCC 8801)).